A 325-amino-acid polypeptide reads, in one-letter code: Apoptosis-enhancing nuclease (325 aa).

The Nucleolar localization signal motif lies at 27–35 (RKRHKRRSR). Residues 85–105 (RAGSGSAPCSRRPAPGKASGP) are disordered. The 157-residue stretch at 110–266 (CVAIDCEMVG…EDATTAMELY (157 aa)) folds into the Exonuclease domain. The short motif at 165-188 (RQHMRKAVPFQVAQKEILKLLKGK) is the Nuclear localization signal element. The tract at residues 281-325 (LWTCPEDREPDSSTDMEQYMEDQYWPDDLAHGSRGGAREAQDRRN) is disordered. Positions 308–325 (DLAHGSRGGAREAQDRRN) are enriched in basic and acidic residues.

Its subcellular location is the nucleus. It is found in the nucleolus. Exonuclease with activity against single- and double-stranded DNA and RNA. Mediates p53-induced apoptosis. When induced by p53 following DNA damage, digests double-stranded DNA to form single-stranded DNA and amplifies DNA damage signals, leading to enhancement of apoptosis. This chain is Apoptosis-enhancing nuclease (AEN), found in Homo sapiens (Human).